A 399-amino-acid polypeptide reads, in one-letter code: CLOCK-interacting pacemaker (399 aa).

Basic and acidic residues predominate over residues 1-12 (MERKNSSRESPR). Disordered regions lie at residues 1–85 (MERK…AKNA) and 159–224 (SYTK…KLAE). Residue serine 213 is modified to Phosphoserine. A coiled-coil region spans residues 333 to 359 (TLKTKELIRQNQATQVELDQLKEQTQL). A compositionally biased stretch (polar residues) spans 378–388 (SLTPGSSNTGS). The disordered stretch occupies residues 378–399 (SLTPGSSNTGSDLEAFSDHPDI).

Interacts with CLOCK. Forms a ternary complex with the CLOCK-BMAL1 heterodimer. Interacts with CAD and HSPA5.

The protein resides in the nucleus. It localises to the cytoplasm. It is found in the cytosol. Functionally, transcriptional repressor which may act as a negative-feedback regulator of CLOCK-BMAL1 transcriptional activity in the circadian-clock mechanism. May stimulate BMAL1-dependent phosphorylation of CLOCK. However, the physiological relevance of these observations is unsure, since experiments in knockout mice showed that CIPC is not critially required for basic circadian clock. This is CLOCK-interacting pacemaker (CIPC) from Pongo abelii (Sumatran orangutan).